The primary structure comprises 52 residues: Histone H2A (52 aa).

Residues M1 to Q25 are disordered. At S2 the chain carries N-acetylserine. Phosphoserine is present on S2. Residue K6 is modified to N6-(2-hydroxyisobutyryl)lysine. K6 is modified (N6-acetyllysine). Over residues T7–S19 the composition is skewed to basic residues. K10 bears the N6-(2-hydroxyisobutyryl)lysine; alternate mark. Residue K10 is modified to N6-lactoyllysine; alternate. K10 carries the N6-succinyllysine modification. Residues K14 and K16 each participate in a glycyl lysine isopeptide (Lys-Gly) (interchain with G-Cter in ubiquitin) cross-link. Position 37 is an N6-(2-hydroxyisobutyryl)lysine; alternate (K37).

In terms of assembly, the nucleosome is a histone octamer containing two molecules each of H2A, H2B, H3 and H4 assembled in one H3-H4 heterotetramer and two H2A-H2B heterodimers. The octamer wraps approximately 147 bp of DNA. Acetylation is not necessary for the antibacterial activity. In terms of processing, monoubiquitination in C-terminus gives a specific tag for epigenetic transcriptional repression. Following DNA double-strand breaks (DSBs), it is ubiquitinated through 'Lys-63' linkage of ubiquitin moieties, leading to the recruitment of repair proteins to sites of DNA damage. H2AK119Ub and ionizing radiation-induced 'Lys-63'-linked ubiquitination are distinct events. Post-translationally, phosphorylation on Ser-2 is enhanced during mitosis. Phosphorylation on Ser-2 directly represses transcription.

It localises to the nucleus. The protein localises to the chromosome. Its subcellular location is the secreted. Core component of nucleosome. Nucleosomes wrap and compact DNA into chromatin, limiting DNA accessibility to the cellular machineries which require DNA as a template. Histones thereby play a central role in transcription regulation, DNA repair, DNA replication and chromosomal stability. DNA accessibility is regulated via a complex set of post-translational modifications of histones, also called histone code, and nucleosome remodeling. Functionally, hipposin shows strong antimicrobial activity against several Gram-positive and Gram-negative bacteria. This chain is Histone H2A, found in Hippoglossus hippoglossus (Atlantic halibut).